Consider the following 202-residue polypeptide: Small ribosomal subunit protein uS5 (202 aa).

In terms of domain architecture, S5 DRBM spans 50–113; that stretch reads LKQELLNVNI…REAKLNLIPV (64 aa).

It belongs to the universal ribosomal protein uS5 family. As to quaternary structure, part of the 30S ribosomal subunit. Contacts protein S4.

Functionally, with S4 and S12 plays an important role in translational accuracy. The polypeptide is Small ribosomal subunit protein uS5 (Pyrobaculum arsenaticum (strain DSM 13514 / JCM 11321 / PZ6)).